The following is a 160-amino-acid chain: Invasion protein IagB (160 aa).

A signal peptide spans 1–19; it reads MHYFFIIVIWLLSINTAWA.

This sequence belongs to the IagB/IpgF/P19 family.

The sequence is that of Invasion protein IagB (iagB) from Salmonella typhi.